Here is a 518-residue protein sequence, read N- to C-terminus: Tyrosine/DOPA decarboxylase 1 (518 aa).

Lys321 is subject to N6-(pyridoxal phosphate)lysine.

The protein belongs to the group II decarboxylase family. As to quaternary structure, homodimer. Requires pyridoxal 5'-phosphate as cofactor. Predominantly expressed in the roots.

It catalyses the reaction L-tyrosine + H(+) = tyramine + CO2. It carries out the reaction L-dopa + H(+) = dopamine + CO2. The catalysed reaction is 5-hydroxy-L-tryptophan + H(+) = serotonin + CO2. Its function is as follows. Marginally higher substrate specificity for L-DOPA over L-tyrosine. This Papaver somniferum (Opium poppy) protein is Tyrosine/DOPA decarboxylase 1 (TYDC1).